Reading from the N-terminus, the 261-residue chain is DNA repair protein RecO (261 aa).

Belongs to the RecO family.

Functionally, involved in DNA repair and RecF pathway recombination. This is DNA repair protein RecO from Gloeobacter violaceus (strain ATCC 29082 / PCC 7421).